The primary structure comprises 198 residues: Probable opine utilization operon repressor (198 aa).

It functions in the pathway opine metabolism; mannopine biosynthesis [regulation]. Functionally, possible repressor for genes for mannityl-opine utilization and / or plasmid conjugative transfer. This Rhizobium rhizogenes (Agrobacterium rhizogenes) protein is Probable opine utilization operon repressor (opnR).